Reading from the N-terminus, the 177-residue chain is MAELTTIARPYAKAAFDVAVEHNAVDTWAEMLTFAALVSENETMQPLLTGSLASTKLAALFISVCGEQINEQGQNLIKVMAENGRLKVLPAVSELFAQYRNEWAKEVEADVVSAAELSSEQQQQISNSLEKRLARKVKLNCSTDAALIAGVIIKAGDLVIDGSVRGKLSRLSEKLQS.

Belongs to the ATPase delta chain family. As to quaternary structure, F-type ATPases have 2 components, F(1) - the catalytic core - and F(0) - the membrane proton channel. F(1) has five subunits: alpha(3), beta(3), gamma(1), delta(1), epsilon(1). F(0) has three main subunits: a(1), b(2) and c(10-14). The alpha and beta chains form an alternating ring which encloses part of the gamma chain. F(1) is attached to F(0) by a central stalk formed by the gamma and epsilon chains, while a peripheral stalk is formed by the delta and b chains.

The protein localises to the cell inner membrane. Its function is as follows. F(1)F(0) ATP synthase produces ATP from ADP in the presence of a proton or sodium gradient. F-type ATPases consist of two structural domains, F(1) containing the extramembraneous catalytic core and F(0) containing the membrane proton channel, linked together by a central stalk and a peripheral stalk. During catalysis, ATP synthesis in the catalytic domain of F(1) is coupled via a rotary mechanism of the central stalk subunits to proton translocation. Functionally, this protein is part of the stalk that links CF(0) to CF(1). It either transmits conformational changes from CF(0) to CF(1) or is implicated in proton conduction. The chain is ATP synthase subunit delta from Shewanella sp. (strain ANA-3).